The primary structure comprises 339 residues: Anthranilate phosphoribosyltransferase (339 aa).

5-phospho-alpha-D-ribose 1-diphosphate-binding positions include glycine 80, 83–84 (GD), threonine 88, 90–93 (NIST), 108–116 (KHGNRSVSS), and serine 120. An anthranilate-binding site is contributed by glycine 80. Serine 92 is a binding site for Mg(2+). Asparagine 111 provides a ligand contact to anthranilate. Arginine 166 contacts anthranilate. Residues aspartate 225 and glutamate 226 each contribute to the Mg(2+) site.

It belongs to the anthranilate phosphoribosyltransferase family. As to quaternary structure, homodimer. Mg(2+) is required as a cofactor.

The enzyme catalyses N-(5-phospho-beta-D-ribosyl)anthranilate + diphosphate = 5-phospho-alpha-D-ribose 1-diphosphate + anthranilate. Its pathway is amino-acid biosynthesis; L-tryptophan biosynthesis; L-tryptophan from chorismate: step 2/5. Its function is as follows. Catalyzes the transfer of the phosphoribosyl group of 5-phosphorylribose-1-pyrophosphate (PRPP) to anthranilate to yield N-(5'-phosphoribosyl)-anthranilate (PRA). This is Anthranilate phosphoribosyltransferase from Alkaliphilus metalliredigens (strain QYMF).